The primary structure comprises 545 residues: CTP synthase (545 aa).

Residues 1-264 (MQYIVVTGGV…ITRLSKLLNM (264 aa)) form an amidoligase domain region. Ser-12 provides a ligand contact to CTP. Position 12 (Ser-12) interacts with UTP. 13–18 (GLGKGT) lines the ATP pocket. L-glutamine is bound at residue Tyr-53. Residue Asp-70 participates in ATP binding. Asp-70 and Glu-140 together coordinate Mg(2+). CTP is bound by residues 147 to 149 (DIE), 185 to 190 (KTKPTQ), and Arg-221. Residues 185–190 (KTKPTQ) and Arg-221 each bind UTP. The region spanning 294–527 (YVDLHDAYIS…VEQALIFKHR (234 aa)) is the Glutamine amidotransferase type-1 domain. Gly-347 is an L-glutamine binding site. Cys-374 functions as the Nucleophile; for glutamine hydrolysis in the catalytic mechanism. L-glutamine-binding positions include 375–378 (LGFQ), Glu-398, and Arg-455. Residues His-500 and Glu-502 contribute to the active site.

This sequence belongs to the CTP synthase family. Homotetramer.

The catalysed reaction is UTP + L-glutamine + ATP + H2O = CTP + L-glutamate + ADP + phosphate + 2 H(+). The enzyme catalyses L-glutamine + H2O = L-glutamate + NH4(+). It catalyses the reaction UTP + NH4(+) + ATP = CTP + ADP + phosphate + 2 H(+). It functions in the pathway pyrimidine metabolism; CTP biosynthesis via de novo pathway; CTP from UDP: step 2/2. Allosterically activated by GTP, when glutamine is the substrate; GTP has no effect on the reaction when ammonia is the substrate. The allosteric effector GTP functions by stabilizing the protein conformation that binds the tetrahedral intermediate(s) formed during glutamine hydrolysis. Inhibited by the product CTP, via allosteric rather than competitive inhibition. Its function is as follows. Catalyzes the ATP-dependent amination of UTP to CTP with either L-glutamine or ammonia as the source of nitrogen. Regulates intracellular CTP levels through interactions with the four ribonucleotide triphosphates. The sequence is that of CTP synthase from Thermoplasma acidophilum (strain ATCC 25905 / DSM 1728 / JCM 9062 / NBRC 15155 / AMRC-C165).